The primary structure comprises 214 residues: Thymidylate kinase (214 aa).

10–17 (GGEGAGKS) is a binding site for ATP.

This sequence belongs to the thymidylate kinase family.

It carries out the reaction dTMP + ATP = dTDP + ADP. Phosphorylation of dTMP to form dTDP in both de novo and salvage pathways of dTTP synthesis. This chain is Thymidylate kinase, found in Brucella canis (strain ATCC 23365 / NCTC 10854 / RM-666).